Consider the following 120-residue polypeptide: Crustacean hyperglycemic hormones 1 (120 aa).

The first 24 residues, 1–24 (MIAFRAVWSALLASLLLLLLAPSA), serve as a signal peptide directing secretion. Disulfide bonds link Cys53–Cys89, Cys69–Cys85, and Cys72–Cys98. Valine amide is present on Val118.

Belongs to the arthropod CHH/MIH/GIH/VIH hormone family. Produced by the medulla terminalis X-organ in the eyestalks and transported to the sinus gland where they are stored and released.

The protein resides in the secreted. Functionally, hormone found in the sinus gland of isopods and decapods which controls the blood sugar level. Has a secretagogue action over the amylase released from the midgut gland. May act as a stress hormone and may be involved in the control of molting and reproduction. The polypeptide is Crustacean hyperglycemic hormones 1 (Penaeus japonicus (Kuruma prawn)).